Consider the following 351-residue polypeptide: Centromere-binding protein 1 (351 aa).

M1 is modified (N-acetylmethionine). Composition is skewed to polar residues over residues 1–10 (MNSLANNNKL), 43–52 (LLSQESNDGN), and 65–77 (KGTQSQYESGLTS). Disordered stretches follow at residues 1 to 164 (MNSL…TQQS), 196 to 233 (KKDISMQPGRRGRKPTTLATTDEWKKQRKDSHKEVERR), and 327 to 351 (YEDMHTHKKQENERKSTRSDNPHEA). S45 carries the phosphoserine; by ATM or ATR modification. Residue S48 is modified to Phosphoserine. S84 is modified (phosphoserine). Polar residues-rich tracts occupy residues 100–124 (VNYTDLIQGQEDSSDAHTSNQTNAN) and 138–164 (TPSNEGVKPNTSLEGMTSSPMESTQQS). Residue T138 is modified to Phosphothreonine. The 49-residue stretch at 222 to 270 (QRKDSHKEVERRRRENINTAINVLSDLLPVRESSKAAILACAAEYIQKL) folds into the bHLH domain.

As to quaternary structure, binds DNA as a dimer. Associates with MET4 to form a heteromeric complex which also includes MET28.

It is found in the nucleus. Its subcellular location is the mitochondrion. The protein localises to the chromosome. It localises to the centromere. Required for chromosome stability and methionine prototrophy. It is involved in chromosomal segregation. Binds to a highly conserved DNA sequence (5'-RTCACRTG-3'), called CDEI, found in centromeres and in several promoters. DNA-binding activity is enhanced by MET28. Required as an auxiliary factor for transcriptional activation of sulfur metabolism together with MET4 and MET28. This Saccharomyces cerevisiae (strain ATCC 204508 / S288c) (Baker's yeast) protein is Centromere-binding protein 1 (CBF1).